The primary structure comprises 382 residues: Regulatory protein RapC (382 aa).

TPR repeat units lie at residues 102 to 138 (YYVNFFRGMYEFDKREFISAITYYKQAEKKLSFVADH), 149 to 182 (AEAYYYMKQTYFSLINIKNAYEIYVEQETYNVRI), 183 to 216 (IQCHFVFGVNLMDERNFEQAARHFKLALNMAQAE), 223 to 256 (GRAYYNLGLCYYNQDLLDPAIDYFEKAVSTFESS), and 263 to 296 (PQAYFLITLIYYKQGKHDKASEYHKRGYEYAKET).

It belongs to the Rap family. In terms of assembly, homodimer. Interacts specifically with the C-terminal DNA-binding domain of ComA. Interacts with CSF.

It localises to the cytoplasm. With respect to regulation, inhibited by the competence and sporulation stimulating factor (CSF), encoded by phrC, which prevents RapC-ComA interaction. Functionally, involved in the regulation of genetic competence development. Inhibits the activity of ComA, a transcriptional factor that regulates the development of genetic competence. Acts by binding to ComA, independently of its phosphorylation state, leading to the inhibition of ComA DNA-binding activity. Does not dephosphorylate phospho-ComA and does not affect the phosphorylation level of the ComP-ComA system. The sequence is that of Regulatory protein RapC (rapC) from Bacillus subtilis (strain 168).